The following is a 1150-amino-acid chain: ATP-dependent helicase/deoxyribonuclease subunit B (1150 aa).

8 to 15 (GRAGSGKS) provides a ligand contact to ATP. Residues Cys789, Cys1109, Cys1112, and Cys1118 each contribute to the [4Fe-4S] cluster site.

It belongs to the helicase family. AddB/RexB type 1 subfamily. Heterodimer of AddA and AddB. The cofactor is Mg(2+). [4Fe-4S] cluster serves as cofactor.

The heterodimer acts as both an ATP-dependent DNA helicase and an ATP-dependent, dual-direction single-stranded exonuclease. Recognizes the chi site generating a DNA molecule suitable for the initiation of homologous recombination. The AddB subunit has 5' -&gt; 3' nuclease activity but not helicase activity. In Clostridium kluyveri (strain NBRC 12016), this protein is ATP-dependent helicase/deoxyribonuclease subunit B.